The sequence spans 91 residues: MAVKIRLKRMGANKSPFYRVVVADSRAPRDGRFIEQIGYYNPVAKPEAEVKLNEELALKWLAEGAKPSDTVRNLFSKAGIMEKFHNAKLAK.

It belongs to the bacterial ribosomal protein bS16 family.

The chain is Small ribosomal subunit protein bS16 from Exiguobacterium sibiricum (strain DSM 17290 / CCUG 55495 / CIP 109462 / JCM 13490 / 255-15).